Here is a 172-residue protein sequence, read N- to C-terminus: GTP-dependent dephospho-CoA kinase (172 aa).

The GTP site is built by aspartate 40, valine 41, valine 42, aspartate 59, and glutamate 112.

This sequence belongs to the GTP-dependent DPCK family.

It carries out the reaction 3'-dephospho-CoA + GTP = GDP + CoA + H(+). The protein operates within cofactor biosynthesis; coenzyme A biosynthesis. In terms of biological role, catalyzes the GTP-dependent phosphorylation of the 3'-hydroxyl group of dephosphocoenzyme A to form coenzyme A (CoA). This is GTP-dependent dephospho-CoA kinase from Methanospirillum hungatei JF-1 (strain ATCC 27890 / DSM 864 / NBRC 100397 / JF-1).